A 58-amino-acid polypeptide reads, in one-letter code: uncharacterized protein (58 aa).

Residues 3–52 (KVILEHLQRIEKQLEILNSKIENFLGFEELSEEELKELDEIEAKMEKGEK) are a coiled coil.

This is an uncharacterized protein from Archaeoglobus fulgidus (strain ATCC 49558 / DSM 4304 / JCM 9628 / NBRC 100126 / VC-16).